The chain runs to 280 residues: UDP-3-O-acyl-N-acetylglucosamine deacetylase (280 aa).

Zn(2+)-binding residues include histidine 79, histidine 237, and aspartate 241. Histidine 264 serves as the catalytic Proton donor.

Belongs to the LpxC family. The cofactor is Zn(2+).

The enzyme catalyses a UDP-3-O-[(3R)-3-hydroxyacyl]-N-acetyl-alpha-D-glucosamine + H2O = a UDP-3-O-[(3R)-3-hydroxyacyl]-alpha-D-glucosamine + acetate. Its pathway is glycolipid biosynthesis; lipid IV(A) biosynthesis; lipid IV(A) from (3R)-3-hydroxytetradecanoyl-[acyl-carrier-protein] and UDP-N-acetyl-alpha-D-glucosamine: step 2/6. In terms of biological role, catalyzes the hydrolysis of UDP-3-O-myristoyl-N-acetylglucosamine to form UDP-3-O-myristoylglucosamine and acetate, the committed step in lipid A biosynthesis. This chain is UDP-3-O-acyl-N-acetylglucosamine deacetylase, found in Chlamydia caviae (strain ATCC VR-813 / DSM 19441 / 03DC25 / GPIC) (Chlamydophila caviae).